Here is a 65-residue protein sequence, read N- to C-terminus: uncharacterized protein (65 aa).

Topologically, residues 1-20 (MRFSNCFNKFKFCIGTEKKY) are cytoplasmic. The chain crosses the membrane as a helical span at residues 21–43 (SFPICTSTYTSFSLFACIWSIFI). The Extracellular portion of the chain corresponds to 44–65 (HISLNKSFIYQKSWYYSFFQNR).

It is found in the host membrane. This is an uncharacterized protein from Acidianus sp. F28 (AFV-2).